The sequence spans 336 residues: NADH-cytochrome b5 reductase 2 (336 aa).

A helical transmembrane segment spans residues 28–50; sequence GGSSNGALYVGIGAAGLAGAYIY. The region spanning 84 to 189 is the FAD-binding FR-type domain; the sequence is QGFISLLLDK…KGPIPKYPWS (106 aa). Position 192–227 (192–227) interacts with FAD; it reads KHEHIALIAGGTGITPMWQTARAIFKNPEDKTKVTL.

The protein belongs to the flavoprotein pyridine nucleotide cytochrome reductase family. The cofactor is FAD.

The protein localises to the mitochondrion outer membrane. The enzyme catalyses 2 Fe(III)-[cytochrome b5] + NADH = 2 Fe(II)-[cytochrome b5] + NAD(+) + H(+). Its function is as follows. May mediate the reduction of outer membrane cytochrome b5. In Phaeosphaeria nodorum (strain SN15 / ATCC MYA-4574 / FGSC 10173) (Glume blotch fungus), this protein is NADH-cytochrome b5 reductase 2 (MCR1).